The primary structure comprises 353 residues: UPF0324 membrane protein PP_3661 (353 aa).

The next 8 helical transmembrane spans lie at Leu20–Ile42, Ala70–Gly92, Trp105–Met127, Ala137–Leu159, Ser166–Ile188, Met234–Arg253, Ile266–Pro288, and Ala326–Val348.

Belongs to the UPF0324 family.

Its subcellular location is the cell membrane. The protein is UPF0324 membrane protein PP_3661 of Pseudomonas putida (strain ATCC 47054 / DSM 6125 / CFBP 8728 / NCIMB 11950 / KT2440).